A 95-amino-acid polypeptide reads, in one-letter code: Co-chaperonin GroES (95 aa).

The protein belongs to the GroES chaperonin family. In terms of assembly, heptamer of 7 subunits arranged in a ring. Interacts with the chaperonin GroEL.

The protein resides in the cytoplasm. Together with the chaperonin GroEL, plays an essential role in assisting protein folding. The GroEL-GroES system forms a nano-cage that allows encapsulation of the non-native substrate proteins and provides a physical environment optimized to promote and accelerate protein folding. GroES binds to the apical surface of the GroEL ring, thereby capping the opening of the GroEL channel. The chain is Co-chaperonin GroES from Rickettsia typhi (strain ATCC VR-144 / Wilmington).